The following is a 68-amino-acid chain: Conotoxin Lp5.2 (68 aa).

The signal sequence occupies residues 1–19 (MRCVPVFIILLLLASPAAP). The propeptide occupies 20–54 (KSLETRIQNDLIRAGLTDADLKTEKGFLSGLLNVA).

Belongs to the conotoxin T superfamily. In terms of processing, contains 2 disulfide bonds that can be either 'C1-C3, C2-C4' or 'C1-C4, C2-C3', since these disulfide connectivities have been observed for conotoxins with cysteine framework V (for examples, see AC P0DQQ7 and AC P81755). Expressed by the venom duct.

It localises to the secreted. The protein is Conotoxin Lp5.2 of Conus leopardus (Leopard cone).